Reading from the N-terminus, the 415-residue chain is Multidrug resistance protein MdtA (415 aa).

Residues 1–21 (MKGSYKSRWVIVIVVVIAAIA) form the signal peptide. Disordered stretches follow at residues 32 to 60 (SRSAAPGATKQAQQSPASGRRGMRSGPLA) and 392 to 415 (EAQSATTPEEKATSREYAKKGARS). The span at 399–415 (PEEKATSREYAKKGARS) shows a compositional bias: basic and acidic residues.

Belongs to the membrane fusion protein (MFP) (TC 8.A.1) family. As to quaternary structure, part of a tripartite efflux system composed of MdtA, MdtB and MdtC.

The protein resides in the cell inner membrane. In terms of biological role, the MdtABC tripartite complex confers resistance against novobiocin and deoxycholate. The chain is Multidrug resistance protein MdtA from Escherichia coli O81 (strain ED1a).